The sequence spans 88 residues: Small ribosomal subunit protein bS20 (88 aa).

The segment at 1–20 (MPNIKSAIKRTKTNNERRAH) is disordered.

The protein belongs to the bacterial ribosomal protein bS20 family.

In terms of biological role, binds directly to 16S ribosomal RNA. The protein is Small ribosomal subunit protein bS20 of Bacillus velezensis (strain DSM 23117 / BGSC 10A6 / LMG 26770 / FZB42) (Bacillus amyloliquefaciens subsp. plantarum).